The chain runs to 270 residues: Probable inner membrane protein BTH_II0599 (270 aa).

The next 6 membrane-spanning stretches (helical) occupy residues arginine 24–serine 44, leucine 45–phenylalanine 65, leucine 98–leucine 118, alanine 150–leucine 170, valine 198–methionine 218, and tyrosine 226–phenylalanine 246.

The protein resides in the cell inner membrane. Its function is as follows. (Microbial infection) Probably transports the toxic C-terminal region of CdiA-2 from B.pseudomallei strain 1026b across the inner membrane to the cytoplasm, where CdiA has a toxic effect. Expression in E.coli makes the bacteria sensitive to the tRNase domain of B.pseudomallei strain 1026b CdiA-2. The chain is Probable inner membrane protein BTH_II0599 from Burkholderia thailandensis (strain ATCC 700388 / DSM 13276 / CCUG 48851 / CIP 106301 / E264).